Consider the following 915-residue polypeptide: Pentatricopeptide repeat-containing protein At5g65560 (915 aa).

PPR repeat units lie at residues 182-216 (IIGC…KVCP), 217-251 (NIYT…GLDP), 252-286 (DFFT…GCRR), 287-321 (NEVA…ECFP), 322-356 (TVRT…GIKP), 357-391 (NIHT…GLMP), 392-426 (NVIT…KLSP), 427-460 (NTRT…KVLP), 461-495 (DVVT…GLVP), 496-530 (DQWT…GVNP), 531-565 (NVVM…NCLP), 566-600 (NSLT…GLQP), 601-635 (TVST…GTKP), 636-670 (DAHT…GVSP), 671-705 (DLFT…GCEP), 724-758 (KQKG…SVTP), 759-794 (NAKS…GISP), 795-829 (SELV…GHLP), 830-864 (QLES…GYYE), and 865-899 (DELA…GCKF).

Belongs to the PPR family. P subfamily.

The chain is Pentatricopeptide repeat-containing protein At5g65560 from Arabidopsis thaliana (Mouse-ear cress).